The sequence spans 435 residues: Serine hydroxymethyltransferase 2 (435 aa).

(6S)-5,6,7,8-tetrahydrofolate-binding positions include leucine 135 and 139 to 141 (GHL). Residue lysine 244 is modified to N6-(pyridoxal phosphate)lysine. Position 260 (glutamate 260) interacts with (6S)-5,6,7,8-tetrahydrofolate.

Belongs to the SHMT family. In terms of assembly, homodimer. Pyridoxal 5'-phosphate is required as a cofactor.

It localises to the cytoplasm. The catalysed reaction is (6R)-5,10-methylene-5,6,7,8-tetrahydrofolate + glycine + H2O = (6S)-5,6,7,8-tetrahydrofolate + L-serine. Its pathway is one-carbon metabolism; tetrahydrofolate interconversion. It functions in the pathway amino-acid biosynthesis; glycine biosynthesis; glycine from L-serine: step 1/1. Its function is as follows. Catalyzes the reversible interconversion of serine and glycine with tetrahydrofolate (THF) serving as the one-carbon carrier. This reaction serves as the major source of one-carbon groups required for the biosynthesis of purines, thymidylate, methionine, and other important biomolecules. Also exhibits THF-independent aldolase activity toward beta-hydroxyamino acids, producing glycine and aldehydes, via a retro-aldol mechanism. The sequence is that of Serine hydroxymethyltransferase 2 from Vibrio cholerae serotype O1 (strain ATCC 39315 / El Tor Inaba N16961).